The following is a 677-amino-acid chain: Zinc finger protein 526 (677 aa).

3 consecutive C2H2-type zinc fingers follow at residues 57–79 (FMCS…QEQH), 109–131 (FQCG…QDAH), and 141–164 (YQCG…KAQH). The disordered stretch occupies residues 167-190 (TAAAKPPVPPPLPPVTPPPPPPAP). Residues 172–190 (PPVPPPLPPVTPPPPPPAP) show a composition bias toward pro residues. Residues 198-220 (YECPECSTLCTTPEEFLEHQGTH) form a C2H2-type 4 zinc finger. Basic and acidic residues predominate over residues 223–232 (SLEKEEHNGL). A disordered region spans residues 223–300 (SLEKEEHNGL…RRASHGPASA (78 aa)). The segment covering 233-257 (EEEEEDDEDDNEETEEEEEAAAEVG) has biased composition (acidic residues). C2H2-type zinc fingers lie at residues 304–326 (FYCS…GRAH), 331–353 (HECT…LRLH), 359–381 (YLCV…RRAH), and 387–408 (HRCR…RRTH). A disordered region spans residues 408–449 (HAGKSGAPPSAAPPTVASAVASLAPAEPTPPPPAPPTPPAQL). The segment covering 410 to 433 (GKSGAPPSAAPPTVASAVASLAPA) has biased composition (low complexity). Over residues 434-449 (EPTPPPPAPPTPPAQL) the composition is skewed to pro residues. 5 consecutive C2H2-type zinc fingers follow at residues 449-472 (LPCP…RAVH), 479-501 (HRCG…LRTH), 507-529 (FQCH…QLTH), 535-557 (YQCL…RRLH), and 580-602 (YYCG…QRVH). The disordered stretch occupies residues 608–627 (LTLQPPRSPPPAPPPPPEPQ). Over residues 613–626 (PRSPPPAPPPPPEP) the composition is skewed to pro residues.

Belongs to the krueppel C2H2-type zinc-finger protein family.

The protein localises to the nucleus. Its function is as follows. May be involved in transcriptional regulation. This is Zinc finger protein 526 (ZNF526) from Bos taurus (Bovine).